Consider the following 415-residue polypeptide: Casein kinase I isoform delta (415 aa).

A Protein kinase domain is found at 9–277 (YRLGRKIGSG…YLRQLFRNLF (269 aa)). ATP-binding positions include 15–23 (IGSGSFGDI) and Lys38. Catalysis depends on Asp128, which acts as the Proton acceptor. Residues 278–364 (HRQGFSYDYV…TSPRPVSGME (87 aa)) form a centrosomal localization signal (CLS) region. Residues 301–315 (ADDAERERRDREERL) are compositionally biased toward basic and acidic residues. The interval 301 to 415 (ADDAERERRD…SSGLQSVVHR (115 aa)) is disordered. Positions 317 to 342 (HSRNPATRGLPSTASGRLRGTQEVAP) are autoinhibitory. Phosphoserine occurs at positions 328 and 331. Residues 347–358 (TPTSHTANTSPR) are compositionally biased toward polar residues. Residue Ser370 is modified to Phosphoserine. An Omega-N-methylarginine modification is found at Arg375. Over residues 380 to 400 (NVSSSDLTGRQDTSRMSTSQI) the composition is skewed to polar residues. Phosphoserine is present on residues Ser382, Ser383, Ser384, Pro401, Ser407, and Ser411.

Belongs to the protein kinase superfamily. CK1 Ser/Thr protein kinase family. Casein kinase I subfamily. In terms of assembly, monomer. Component of the circadian core oscillator, which includes the CRY proteins, CLOCK, or NPAS2, BMAL1 or BMAL2, CSNK1D and/or CSNK1E, TIMELESS and the PER proteins. Interacts directly with PER1 and PER2 which may lead to their degradation. Interacts with MAP1A. Interacts with MAPT/TAU, DBNDD2, AIB1/NCOA3 and ESR1. Interacts with AKAP9/AKAP450; this interaction promotes centrosomal subcellular location. Binds to tubulins in mitotic cells upon DNA damage. Interacts with GJA1. Interacts with SNAPIN. Interacts with DNMT1. Interacts with DDX3X; this interaction enhances CSNK1D kinase activity in vitro, but it is unclear whether this interaction is physiologically relevant. Interacts with FAM83A, FAM83B, FAM83E and FAM83H (via DUF1669). In terms of processing, autophosphorylated on serine and threonine residues; this autophosphorylation represses activity. Reactivated by phosphatase-mediated dephosphorylation. May be dephosphorylated by PP1. As to expression, expressed ubiquitously. However, kinase activity is not uniform, with highest kinase activity in splenocytes.

The protein resides in the cytoplasm. It localises to the nucleus. It is found in the cytoskeleton. Its subcellular location is the microtubule organizing center. The protein localises to the centrosome. The protein resides in the perinuclear region. It localises to the cell membrane. It is found in the spindle. Its subcellular location is the golgi apparatus. It carries out the reaction L-seryl-[protein] + ATP = O-phospho-L-seryl-[protein] + ADP + H(+). The catalysed reaction is L-threonyl-[protein] + ATP = O-phospho-L-threonyl-[protein] + ADP + H(+). It catalyses the reaction L-seryl-[tau protein] + ATP = O-phospho-L-seryl-[tau protein] + ADP + H(+). The enzyme catalyses L-threonyl-[tau protein] + ATP = O-phospho-L-threonyl-[tau protein] + ADP + H(+). Its activity is regulated as follows. Exhibits substrate-dependent heparin activation. Drug-mediated inhibition leads to a delay of the oscillations with the magnitude of this effect dependent upon the timing of drug administration. Inhibited by phosphorylation. Functionally, essential serine/threonine-protein kinase that regulates diverse cellular growth and survival processes including Wnt signaling, DNA repair and circadian rhythms. It can phosphorylate a large number of proteins. Casein kinases are operationally defined by their preferential utilization of acidic proteins such as caseins as substrates. Phosphorylates connexin-43/GJA1, MAP1A, SNAPIN, MAPT/TAU, TOP2A, DCK, HIF1A, EIF6, p53/TP53, DVL2, DVL3, ESR1, AIB1/NCOA3, DNMT1, PKD2, YAP1, PER1 and PER2. Central component of the circadian clock. In balance with PP1, determines the circadian period length through the regulation of the speed and rhythmicity of PER1 and PER2 phosphorylation. Controls PER1 and PER2 nuclear transport and degradation. YAP1 phosphorylation promotes its SCF(beta-TRCP) E3 ubiquitin ligase-mediated ubiquitination and subsequent degradation. DNMT1 phosphorylation reduces its DNA-binding activity. Phosphorylation of ESR1 and AIB1/NCOA3 stimulates their activity and coactivation. Phosphorylation of DVL2 and DVL3 regulates WNT3A signaling pathway that controls neurite outgrowth. Phosphorylates NEDD9/HEF1. EIF6 phosphorylation promotes its nuclear export. Triggers down-regulation of dopamine receptors in the forebrain. Activates DCK in vitro by phosphorylation. TOP2A phosphorylation favors DNA cleavable complex formation. May regulate the formation of the mitotic spindle apparatus in extravillous trophoblast. Modulates connexin-43/GJA1 gap junction assembly by phosphorylation. Probably involved in lymphocyte physiology. Regulates fast synaptic transmission mediated by glutamate. The sequence is that of Casein kinase I isoform delta (Csnk1d) from Mus musculus (Mouse).